A 170-amino-acid chain; its full sequence is Cathelicidin antimicrobial peptide (170 aa).

The signal sequence occupies residues Met-1–Ala-30. Positions Gln-31–Arg-131 are cleaved as a propeptide — cathelin-like domain (CLD). Disulfide bonds link Cys-86–Cys-97 and Cys-108–Cys-125. The tract at residues Leu-150–Gly-162 is active core.

This sequence belongs to the cathelicidin family. Monomer, homodimer or homotrimer (in vitro). Oligomerizes as tetra- or hexamer in solution (in vitro). Post-translationally, proteolytically cleaved by proteinase PRTN3 into antibacterial peptide LL-37. Proteolytically cleaved by cathepsin CTSG and neutrophil elastase ELANE. In terms of processing, resistant to proteolytic degradation in solution, and when bound to both zwitterionic (mimicking mammalian membranes) and negatively charged membranes (mimicking bacterial membranes). After secretion onto the skin surface, the CAMP gene product is processed by a serine protease-dependent mechanism into multiple novel antimicrobial peptides distinct from and shorter than cathelicidin LL-37. These peptides show enhanced antimicrobial action, acquiring the ability to kill skin pathogens such as S.aureus, E.coli and C.albicans. These peptides have lost the ability to stimulate CXCL8/IL8 release from keratinocytes. The peptides act synergistically, killing bacteria at lower concentrations when present together, and maintain activity at increased salt condition.

It localises to the secreted. Its subcellular location is the vesicle. Its function is as follows. Antimicrobial protein that is an integral component of the innate immune system. Binds to bacterial lipopolysaccharides (LPS). Acts via neutrophil N-formyl peptide receptors to enhance the release of CXCL2. Postsecretory processing generates multiple cathelicidin antimicrobial peptides with various lengths which act as a topical antimicrobial defense in sweat on skin. The unprocessed precursor form, cathelicidin antimicrobial peptide, inhibits the growth of Gram-negative E.coli and E.aerogenes with efficiencies comparable to that of the mature peptide LL-37 (in vitro). In terms of biological role, antimicrobial peptide that is an integral component of the innate immune system. Binds to bacterial lipopolysaccharides (LPS). Causes membrane permeabilization by forming transmembrane pores (in vitro). Causes lysis of E.coli. Exhibits antimicrobial activity against Gram-negative bacteria such as P.aeruginosa, S.typhimurium, E.aerogenes, E.coli and P.syringae, Gram-positive bacteria such as L.monocytogenes, S.epidermidis, S.pyogenes and S.aureus, as well as vancomycin-resistant enterococci (in vitro). Exhibits antimicrobial activity against methicillin-resistant S.aureus, P.mirabilis, and C.albicans in low-salt media, but not in media containing 100 mM NaCl (in vitro). Forms chiral supramolecular assemblies with quinolone signal (PQS) molecules of P.aeruginosa, which may lead to interference of bacterial quorum signaling and perturbance of bacterial biofilm formation. May form supramolecular fiber-like assemblies on bacterial membranes. Induces cytokine and chemokine producation as well as TNF/TNFA and CSF2/GMCSF production in normal human keratinocytes. Exhibits hemolytic activity against red blood cells. Exhibits antimicrobial activity against E.coli and B.megaterium (in vitro). This is Cathelicidin antimicrobial peptide from Chlorocebus aethiops (Green monkey).